The sequence spans 88 residues: MKSAFLVLLPLPSSTLQKMQLRLQPVMFLTCRRFAPLSIIPKAECPSKGIPLSLVTNTSSLPVTLFRTLFSSAKETMYSFEYLFSSLL.

This is an uncharacterized protein from Archaeoglobus fulgidus (strain ATCC 49558 / DSM 4304 / JCM 9628 / NBRC 100126 / VC-16).